The following is a 786-amino-acid chain: DNA repair and recombination protein RAD54-like (786 aa).

The segment at 2–9 (RRSLAPSQ) is required for chromatin remodeling, strand pairing activities and coupling of ATPase activity. A Phosphothreonine modification is found at T22. In terms of domain architecture, Helicase ATP-binding spans 165–340 (EGKRGNFNGC…FSLVNFVNPE (176 aa)). ATP is bound at residue 178–185 (DEMGLGKT). Positions 291 to 294 (DEGH) match the DEGH box motif. The Helicase C-terminal domain maps to 497-654 (LLDFMLAAIR…NNDSAEKHFT (158 aa)). Residues 740-786 (KQPTCITEDNHSEQPQLNSKRNANSVLENDDDEDFDPNSSDEKFLGF) form a disordered region. The segment covering 752–766 (EQPQLNSKRNANSVL) has biased composition (polar residues).

The protein belongs to the SNF2/RAD54 helicase family. In terms of assembly, interacts (via N-terminus) with spn-A/Rad51.

The protein localises to the nucleus. In terms of biological role, involved in mitotic DNA repair and meiotic recombination. Functions in the recombinational DNA repair pathway. Essential for interhomolog gene conversion (GC), but may have a less important role in intersister GC than spn-A/Rad51. In the presence of DNA, spn-A/Rad51 enhances the ATPase activity of okr/Rad54. The polypeptide is DNA repair and recombination protein RAD54-like (Drosophila virilis (Fruit fly)).